The chain runs to 183 residues: Glutathione-regulated potassium-efflux system ancillary protein KefG (183 aa).

Belongs to the NAD(P)H dehydrogenase (quinone) family. KefG subfamily. As to quaternary structure, interacts with KefB.

The protein resides in the cell inner membrane. The catalysed reaction is a quinone + NADH + H(+) = a quinol + NAD(+). The enzyme catalyses a quinone + NADPH + H(+) = a quinol + NADP(+). In terms of biological role, regulatory subunit of a potassium efflux system that confers protection against electrophiles. Required for full activity of KefB. The polypeptide is Glutathione-regulated potassium-efflux system ancillary protein KefG (Serratia proteamaculans (strain 568)).